The sequence spans 396 residues: S-adenosylmethionine synthase (396 aa).

Residue His-16 participates in ATP binding. Asp-18 is a Mg(2+) binding site. Glu-44 lines the K(+) pocket. L-methionine contacts are provided by Glu-57 and Gln-100. A flexible loop region spans residues 100–110 (QSPDIAQGVDR). ATP contacts are provided by residues 167–169 (DAK), 233–234 (RF), Asp-242, 248–249 (RK), Ala-265, and Lys-269. Residue Asp-242 participates in L-methionine binding. Lys-273 is an L-methionine binding site.

Belongs to the AdoMet synthase family. In terms of assembly, homotetramer; dimer of dimers. Mg(2+) serves as cofactor. It depends on K(+) as a cofactor.

It localises to the cytoplasm. It carries out the reaction L-methionine + ATP + H2O = S-adenosyl-L-methionine + phosphate + diphosphate. It functions in the pathway amino-acid biosynthesis; S-adenosyl-L-methionine biosynthesis; S-adenosyl-L-methionine from L-methionine: step 1/1. In terms of biological role, catalyzes the formation of S-adenosylmethionine (AdoMet) from methionine and ATP. The overall synthetic reaction is composed of two sequential steps, AdoMet formation and the subsequent tripolyphosphate hydrolysis which occurs prior to release of AdoMet from the enzyme. The polypeptide is S-adenosylmethionine synthase (Paraburkholderia phytofirmans (strain DSM 17436 / LMG 22146 / PsJN) (Burkholderia phytofirmans)).